The following is a 319-amino-acid chain: Triacylglycerol lipase (319 aa).

Positions 10–288 (PVILVHGLAG…TSYHWNHLDE (279 aa)) constitute an AB hydrolase-1 domain. Leu-17 lines the substrate pocket. Residue Ser-87 is the Nucleophile of the active site. Substrate is bound at residue Gln-88. Cys-190 and Cys-269 are disulfide-bonded. A Ca(2+)-binding site is contributed by Asp-241. Active-site charge relay system residues include Asp-263 and His-285. Residues Asp-287, Gln-291, and Val-295 each coordinate Ca(2+).

This sequence belongs to the AB hydrolase superfamily. Pseudomonas lipase family. Monomer. Interacts with lipase-specific foldase Lif. Ca(2+) is required as a cofactor.

It localises to the secreted. It catalyses the reaction a triacylglycerol + H2O = a diacylglycerol + a fatty acid + H(+). In terms of biological role, catalyzes the hydrolysis of triacylglycerol. The chain is Triacylglycerol lipase from Pseudarthrobacter phenanthrenivorans (Arthrobacter phenanthrenivorans).